Reading from the N-terminus, the 375-residue chain is Tyrosine--tRNA ligase (375 aa).

Residues Tyr-37, Tyr-168, Gln-172, Asp-175, and Gln-190 each coordinate L-tyrosine. The short motif at 251–255 (KMSKS) is the 'KMSKS' region element. Lys-254 contributes to the ATP binding site.

The protein belongs to the class-I aminoacyl-tRNA synthetase family. TyrS type 4 subfamily. In terms of assembly, homodimer.

The protein localises to the cytoplasm. It catalyses the reaction tRNA(Tyr) + L-tyrosine + ATP = L-tyrosyl-tRNA(Tyr) + AMP + diphosphate + H(+). Catalyzes the attachment of tyrosine to tRNA(Tyr) in a two-step reaction: tyrosine is first activated by ATP to form Tyr-AMP and then transferred to the acceptor end of tRNA(Tyr). This is Tyrosine--tRNA ligase from Thermococcus gammatolerans (strain DSM 15229 / JCM 11827 / EJ3).